The sequence spans 63 residues: Large ribosomal subunit protein bL32 (63 aa).

The disordered stretch occupies residues 1–20; sequence MANPKAKMSKSRRDKRRAQF. Over residues 7–18 the composition is skewed to basic residues; that stretch reads KMSKSRRDKRRA.

It belongs to the bacterial ribosomal protein bL32 family.

The chain is Large ribosomal subunit protein bL32 from Chlorobaculum tepidum (strain ATCC 49652 / DSM 12025 / NBRC 103806 / TLS) (Chlorobium tepidum).